A 112-amino-acid chain; its full sequence is MASPNGGDDFESSLLSFEKLDRASPDLWPEQLPGVVEFAASCKNPITDSPPKWMAELESEDYEMLKELGSLTTANLMEKVRGLQNLAYQLGLEESREMTRGKFLNILESFKK.

This sequence belongs to the lin-52 family. In terms of assembly, component of the DREAM complex.

The protein is Protein lin-52 homolog (lin52) of Tetraodon nigroviridis (Spotted green pufferfish).